The following is a 332-amino-acid chain: Fe(3+) dicitrate transport system permease protein FecC (332 aa).

At Met-1–Pro-7 the chain is on the cytoplasmic side. The chain crosses the membrane as a helical span at residues Val-8–Cys-28. Topologically, residues Tyr-29–Ser-64 are periplasmic. Residues Leu-65–Thr-85 traverse the membrane as a helical segment. Over His-86–Gly-100 the chain is Cytoplasmic. A helical membrane pass occupies residues Ala-101–Leu-121. Residue Ser-122 is a topological domain, periplasmic. Residues Phe-123–Phe-143 form a helical membrane-spanning segment. The Cytoplasmic segment spans residues Arg-144–Lys-151. Residues Leu-152–Leu-172 traverse the membrane as a helical segment. At Leu-173 to Gln-199 the chain is on the periplasmic side. The helical transmembrane segment at Leu-200–Leu-220 threads the bilayer. The Cytoplasmic portion of the chain corresponds to Leu-221–Met-244. A helical transmembrane segment spans residues Leu-245–Leu-265. Residues Leu-266–Pro-307 lie on the Periplasmic side of the membrane. A helical transmembrane segment spans residues Gly-308–Val-328. Over Arg-329–Gly-332 the chain is Cytoplasmic.

Belongs to the binding-protein-dependent transport system permease family. FecCD subfamily. The complex is composed of two ATP-binding proteins (FecE), two transmembrane proteins (FecC and FecD) and a solute-binding protein (FecB). Interacts with FecB.

The protein resides in the cell inner membrane. Its function is as follows. Part of the ABC transporter complex FecBCDE involved in citrate-dependent Fe(3+) uptake. Probably responsible for the translocation of the substrate across the membrane. This Escherichia coli (strain K12) protein is Fe(3+) dicitrate transport system permease protein FecC.